We begin with the raw amino-acid sequence, 220 residues long: Guanylate kinase (220 aa).

The 180-residue stretch at 15-194 (GLMLVISSPS…AFEGIEAIVK (180 aa)) folds into the Guanylate kinase-like domain. Residue 22 to 29 (SPSGAGKS) coordinates ATP.

The protein belongs to the guanylate kinase family.

Its subcellular location is the cytoplasm. It catalyses the reaction GMP + ATP = GDP + ADP. In terms of biological role, essential for recycling GMP and indirectly, cGMP. This is Guanylate kinase from Agrobacterium fabrum (strain C58 / ATCC 33970) (Agrobacterium tumefaciens (strain C58)).